A 432-amino-acid chain; its full sequence is Major royal jelly protein 1 (432 aa).

A signal peptide spans 1-19; it reads MTRLFMLVCLGIVCQGTTG. N-linked (GlcNAc...) asparagine glycans are attached at residues asparagine 28, asparagine 144, and asparagine 177. Intrachain disulfides connect cysteine 118-cysteine 150, cysteine 132-cysteine 195, and cysteine 329-cysteine 416. Proline 364 serves as a coordination point for 24-methylenecholesterol. Position 431 is a histidine amide; atypical (histidine 431). Leucine 432 is modified (leucine amide; atypical).

It belongs to the major royal jelly protein family. Is present in royal jelly in different forms: monomer (55 kDa), oligomeric subunit (ca. 287-420 kDa), and water-insoluble aggregates in sediment after interaction with fatty acids. Component of the apisin heterooligomer complex consisting of 4 copies of MRJP1 and 4 copies of apisimin, associated with 8 molecules of 24-methylenecholesterol; apisimin forms a bridge connecting two MRJP1 dimers. At low pH multiple apisin octamers stack to form filaments that increase the viscosity of royal jelly; these filaments may be stabilized by bound fatty acid chains. The mandibular gland, where royal jelly is produced, has low pH conditions favouring filament formation, while the higher pH of the insect midgut favors filament disassembly. N-glycosylated on Asn-28, Asn-144 and Asn-177. Glycosylation is required to prevent apisin multimers from aggregating. In terms of processing, jellein-2 is probably processed to yield jellein-1 and jellein-4. As to expression, found in and secreted from the hypopharyngeal glands of the worker honey bee (at protein level); expression peaks at 12 days post eclosion. Expressed in the brains of worker bees (at protein level); found in antennal lobe, optical lobe and a subpopulation of Kenyon cells in the mushroom body. Found in the ommatidia of worker bees (at protein level). Expressed in the spermatheca of adult queen bees (at protein level); expression levels are higher in mated queens than in virgin queens. Expressed in queen bee ovaries and male drone testes.

The protein localises to the secreted. It localises to the cytoplasm. Its subcellular location is the cell projection. It is found in the rhabdomere. The protein resides in the cytoskeleton. Most abundant protein component of royal jelly, a substance produced in the hypopharyngeal gland containing proteins, free amino acids, fatty acids, sugars and other nutrients, which is fed to developing larvae by worker nurse bees. Major royal jelly proteins (Mrjps) are high in essential amino acids and probably have a nutritional function in larval food. All larvae are fed some royal jelly (also known as worker jelly) early in their development but it forms the principal source of nutrition for larvae destined to become queen bees. Induces the differentiation of honey bee larvae into queens through an Egfr-mediated signaling pathway. Promotes body size increase by activating p70 S6 kinase, stimulates ovary development by augmenting the titer of vitellogenin (Vg) and juvenile hormone, and reduces developmental time by increasing the activity of mitogen-activated protein kinase and inducing 20-hydroxyecdysone (ecdysterone, 20E) production. Together with apisimin forms the apisin complex that polymerizes at low pH, forming a fiber network and increasing the viscosity of royal jelly. The viscous royal Jelly placed in honeycomb cells containing larvae destined to become queens acts as both a food supply and an adhesive preventing larvae from falling out; queens are reared in special large cells oriented vertically. Produced in the spermatheca of adult queen bees, along with other major royal jelly proteins, where it may act as a nutrient supply for sperm stored by mated queens, or be involved in energy metabolism. Functionally, has antibacterial activity against the Gram-positive bacteria S.aureus ATCC 6535, S.saprophyticus and B.subtilis CCT2471, and the Gram-negative bacteria E.coli CCT1371, E.cloacae ATCC 23355, K.pneumoniae ATCC 13883 and P.aeruginosa ATCC 27853, and antifungal activity against C.albicans. Lack cytolytic activity and does not induce rat peritoneal mast cell degranulation. Its function is as follows. Lacks antibacterial and antifungal activity. Lacks cytolytic activity and does not induce rat peritoneal mast cell degranulation. In Apis mellifera (Honeybee), this protein is Major royal jelly protein 1.